A 102-amino-acid chain; its full sequence is Colipase-like protein 2 (102 aa).

A signal peptide spans 1–23 (MAFTQALVTVLALLAGTLPHRHS). 5 disulfide bridges follow: cysteine 36-cysteine 47, cysteine 42-cysteine 58, cysteine 46-cysteine 80, cysteine 68-cysteine 88, and cysteine 82-cysteine 99.

The protein belongs to the colipase family.

It localises to the secreted. In Mus musculus (Mouse), this protein is Colipase-like protein 2 (Clpsl2).